The sequence spans 677 residues: MSAAKNEMYYSLLEWFKTLNLNAPHADAESLADGVAVAQALNQFAPESFTDSWLAKIKASAVGINWRLRMSNLKKVTQSLYDYYSEVLNYTLSDFVKPDVQRIAEKCDLVELERLLQLVLGCAVNCAKKQSYITEIMCLEEELQANIMRALQELESSRNAAEGGIVTSLSRSSISGMLDGKVLQEERDAMAQKCFETEKKMLLLIDEKTNLQQELQRVQKEFARLEHSSTVIGDDGVSLGPVQTGSVRYNELRRQLDLLKEELLQSEGAREDLKLKAQQQETDLWHMQMRIDELLKSTAEVTTLKDEVDVLRESNDKLKICEGQLDTYKKKLEDYNDLKKQVKILEERSADYVQQNAQFEEDAKRYANTKGQIELFKKEIQDLHTKLDSESSKNVKLEFDNKNLEGKNLALQRAKDSLLKERDNLRETVDELKCGHLSSNSGLTGTTVSRELQPPATVEKMQRLEAENKALREGQGGQTALAQLLDDANKRCENLREQLKTANERILSLSHASQSDDPILKESEFGKQIKQLMELNEQKTLQLEESVTQSSSLQCKVTQLETNLTAREQEVMAYDAKYRKCLEKAKEVIKSFDPRIASAIDASALEKYFDVVEEEPKPKMSVMEEQLMTSAFYRLGVNAQRDAVDSKLAILMGSGQTFLARQRQSAPRKSLSAMKSK.

The region spanning 6-123 (NEMYYSLLEW…RLLQLVLGCA (118 aa)) is the Calponin-homology (CH) domain. Coiled-coil stretches lie at residues 135 to 436 (EIMC…KCGH) and 478 to 588 (QTAL…AKEV).

It belongs to the hook family. Homodimer. Interacts with microtubules via its N-terminus.

Its subcellular location is the cytoplasm. The protein localises to the cytoskeleton. The protein resides in the endosome. It localises to the synapse. Involved in endocytic trafficking by stabilizing organelles of the endocytic pathway. Probably acts as a cytoskeletal linker protein required to tether endosome vesicles to the cytoskeleton. Involved in modulation of endocytosis at stages required for down-regulation of membrane proteins that control synapse size. Not involved in synaptic vesicle recycling. Required in R7 cells for boss endocytosis into multivesicular bodies (MVBs). Has a role in regulating adult longevity. The protein is Protein hook of Drosophila persimilis (Fruit fly).